Reading from the N-terminus, the 233-residue chain is Ribose-5-phosphate isomerase A (233 aa).

Substrate is bound by residues 28-31, 83-86, and 96-99; these read TGST, DGAD, and KGGG. The Proton acceptor role is filled by E105. K123 serves as a coordination point for substrate.

This sequence belongs to the ribose 5-phosphate isomerase family. Homodimer.

It catalyses the reaction aldehydo-D-ribose 5-phosphate = D-ribulose 5-phosphate. It functions in the pathway carbohydrate degradation; pentose phosphate pathway; D-ribose 5-phosphate from D-ribulose 5-phosphate (non-oxidative stage): step 1/1. Catalyzes the reversible conversion of ribose-5-phosphate to ribulose 5-phosphate. The protein is Ribose-5-phosphate isomerase A of Rhizobium rhizogenes (strain K84 / ATCC BAA-868) (Agrobacterium radiobacter).